The following is a 1142-amino-acid chain: Ribonucleoside-diphosphate reductase large subunit (1142 aa).

The interval 1–33 is disordered; it reads MANRPAASALAGARSPSERQEPREPEVAPPGGD. Residues 16–26 are compositionally biased toward basic and acidic residues; sequence PSERQEPREPE. The RIP homotypic interaction motif (RHIM) signature appears at 55 to 75; the sequence is AYRISDSSFVQCGSNCSMIID. Residues 118 to 322 are disordered; it reads SGPSATTSVG…TDPGYPVPLE (205 aa). Residues 119 to 132 are compositionally biased toward polar residues; sequence GPSATTSVGTQTSG. Positions 141–159 are enriched in pro residues; the sequence is TPEPQGPQAVPPPPPPPFP. The segment covering 164–179 has biased composition (basic and acidic residues); sequence CCARRDARGGAEKDVG. Acidic residues predominate over residues 192-205; that stretch reads SETEDSDSSDEDTG. Residues 277-303 are compositionally biased toward low complexity; it reads GSATDPRASADSDSAAHAAAPQADVAP. The segment at 294-400 is alpha-crystallin domain; the sequence is AAAPQADVAP…CLDLPPVPPN (107 aa). Substrate is bound by residues threonine 571, 586–587, glycine 617, 796–800, and 973–977; these read SC, NLCTE, and PTAAS. Cysteine 587 and cysteine 813 are oxidised to a cystine. The active-site Proton acceptor is the asparagine 796. The active-site Cysteine radical intermediate is cysteine 798. Glutamate 800 functions as the Proton acceptor in the catalytic mechanism.

This sequence belongs to the ribonucleoside diphosphate reductase large chain family. In terms of assembly, heterotetramer composed of a homodimer of the large subunit (R1) and a homodimer of the small subunit (R2). Larger multisubunit protein complex are also active, composed of (R1)n(R2)n. May self-assemble (via RIP homotypic interaction motif/RHIM) into homomeric fibrillar amyloid structures. Interacts (via RHIM) with human RIPK1 (via RHIM). Interacts (via RHIM) with human RIPK3 (via RHIM). May interact (via RHIM) with human ZBP1 (via RHIM). Interacts (via C-terminus) with host CASP8.

The protein localises to the host cell membrane. Its subcellular location is the host endosome membrane. The enzyme catalyses a 2'-deoxyribonucleoside 5'-diphosphate + [thioredoxin]-disulfide + H2O = a ribonucleoside 5'-diphosphate + [thioredoxin]-dithiol. In terms of biological role, ribonucleoside-diphosphate reductase holoenzyme that provides the precursors necessary for viral DNA synthesis. Allows virus growth in non-dividing cells, as well as reactivation from latency in infected hosts. Catalyzes the biosynthesis of deoxyribonucleotides from the corresponding ribonucleotides. The N-terminal region confers antiapoptotic activity in differentiated cells such as neurons and is important for viral reactivation to increase neural survivability. Prevents host necroptosis by targeting host RIPK1 and RIPK3, thereby hampering the formation of necroptotic RIPK1-RIPK3 complexes. May form hetero-amyloid structures with host proteins RIPK3 or ZBP1, thereby preventing RIPK3- and ZBP1-mediated necroptosis. In addition, inhibits extrinsic apoptosis by targeting host CASP8. This Homo sapiens (Human) protein is Ribonucleoside-diphosphate reductase large subunit.